We begin with the raw amino-acid sequence, 76 residues long: uncharacterized protein (76 aa).

This is an uncharacterized protein from Mycobacterium tuberculosis (strain ATCC 25618 / H37Rv).